Here is a 141-residue protein sequence, read N- to C-terminus: Holo-[acyl-carrier-protein] synthase (141 aa).

Aspartate 7 and glutamate 57 together coordinate Mg(2+).

This sequence belongs to the P-Pant transferase superfamily. AcpS family. It depends on Mg(2+) as a cofactor.

The protein resides in the cytoplasm. It carries out the reaction apo-[ACP] + CoA = holo-[ACP] + adenosine 3',5'-bisphosphate + H(+). Transfers the 4'-phosphopantetheine moiety from coenzyme A to a Ser of acyl-carrier-protein. This Corynebacterium efficiens (strain DSM 44549 / YS-314 / AJ 12310 / JCM 11189 / NBRC 100395) protein is Holo-[acyl-carrier-protein] synthase.